The following is a 333-amino-acid chain: 4-hydroxy-3-methylbut-2-enyl diphosphate reductase (333 aa).

A [4Fe-4S] cluster-binding site is contributed by Cys-33. (2E)-4-hydroxy-3-methylbut-2-enyl diphosphate-binding residues include His-62 and His-95. Dimethylallyl diphosphate is bound by residues His-62 and His-95. Isopentenyl diphosphate is bound by residues His-62 and His-95. A [4Fe-4S] cluster-binding site is contributed by Cys-117. His-145 serves as a coordination point for (2E)-4-hydroxy-3-methylbut-2-enyl diphosphate. His-145 lines the dimethylallyl diphosphate pocket. Residue His-145 participates in isopentenyl diphosphate binding. Glu-147 serves as the catalytic Proton donor. Position 186 (Thr-186) interacts with (2E)-4-hydroxy-3-methylbut-2-enyl diphosphate. Position 216 (Cys-216) interacts with [4Fe-4S] cluster. (2E)-4-hydroxy-3-methylbut-2-enyl diphosphate contacts are provided by Ser-244, Ser-245, Asn-246, and Ser-289. Dimethylallyl diphosphate-binding residues include Ser-244, Ser-245, Asn-246, and Ser-289. Isopentenyl diphosphate-binding residues include Ser-244, Ser-245, Asn-246, and Ser-289.

Belongs to the IspH family. [4Fe-4S] cluster serves as cofactor.

It carries out the reaction isopentenyl diphosphate + 2 oxidized [2Fe-2S]-[ferredoxin] + H2O = (2E)-4-hydroxy-3-methylbut-2-enyl diphosphate + 2 reduced [2Fe-2S]-[ferredoxin] + 2 H(+). It catalyses the reaction dimethylallyl diphosphate + 2 oxidized [2Fe-2S]-[ferredoxin] + H2O = (2E)-4-hydroxy-3-methylbut-2-enyl diphosphate + 2 reduced [2Fe-2S]-[ferredoxin] + 2 H(+). It functions in the pathway isoprenoid biosynthesis; dimethylallyl diphosphate biosynthesis; dimethylallyl diphosphate from (2E)-4-hydroxy-3-methylbutenyl diphosphate: step 1/1. The protein operates within isoprenoid biosynthesis; isopentenyl diphosphate biosynthesis via DXP pathway; isopentenyl diphosphate from 1-deoxy-D-xylulose 5-phosphate: step 6/6. Its function is as follows. Catalyzes the conversion of 1-hydroxy-2-methyl-2-(E)-butenyl 4-diphosphate (HMBPP) into a mixture of isopentenyl diphosphate (IPP) and dimethylallyl diphosphate (DMAPP). Acts in the terminal step of the DOXP/MEP pathway for isoprenoid precursor biosynthesis. In Corynebacterium diphtheriae (strain ATCC 700971 / NCTC 13129 / Biotype gravis), this protein is 4-hydroxy-3-methylbut-2-enyl diphosphate reductase.